Consider the following 405-residue polypeptide: S-adenosylmethionine synthase (405 aa).

His-22 is a binding site for ATP. Residue Asp-24 participates in Mg(2+) binding. K(+) is bound at residue Glu-50. Residues Glu-63 and Gln-107 each contribute to the L-methionine site. Residues 107 to 117 (QSPDIAQGVNR) are flexible loop. ATP contacts are provided by residues 184–186 (DGK), 250–251 (RF), Asp-259, 265–266 (RK), Ala-282, and Lys-286. Asp-259 is a binding site for L-methionine. Residue Lys-290 coordinates L-methionine.

It belongs to the AdoMet synthase family. As to quaternary structure, homotetramer; dimer of dimers. Requires Mg(2+) as cofactor. K(+) serves as cofactor.

Its subcellular location is the cytoplasm. The catalysed reaction is L-methionine + ATP + H2O = S-adenosyl-L-methionine + phosphate + diphosphate. The protein operates within amino-acid biosynthesis; S-adenosyl-L-methionine biosynthesis; S-adenosyl-L-methionine from L-methionine: step 1/1. In terms of biological role, catalyzes the formation of S-adenosylmethionine (AdoMet) from methionine and ATP. The overall synthetic reaction is composed of two sequential steps, AdoMet formation and the subsequent tripolyphosphate hydrolysis which occurs prior to release of AdoMet from the enzyme. The sequence is that of S-adenosylmethionine synthase from Roseiflexus castenholzii (strain DSM 13941 / HLO8).